Consider the following 599-residue polypeptide: Sulfite reductase [NADPH] flavoprotein alpha-component (599 aa).

Residues 64 to 202 (ITIISASQTG…AASEWRARVV (139 aa)) enclose the Flavodoxin-like domain. Residues 70 to 75 (SQTGNA), 117 to 120 (STQG), and 153 to 162 (LGDSSYEFFC) each bind FMN. One can recognise an FAD-binding FR-type domain in the interval 234 to 448 (DAPLVASLSV…IEHNDNFRLP (215 aa)). FAD is bound by residues Thr322, Ala356, 386–389 (RLYS), 404–406 (TVG), Tyr410, and 419–422 (GGAS). NADP(+)-binding positions include 519 to 520 (SR), 525 to 529 (KVYVQ), and Asp561. Tyr599 is a binding site for FAD.

It belongs to the NADPH-dependent sulphite reductase flavoprotein subunit CysJ family. The protein in the N-terminal section; belongs to the flavodoxin family. In the C-terminal section; belongs to the flavoprotein pyridine nucleotide cytochrome reductase family. In terms of assembly, alpha(8)-beta(8). The alpha component is a flavoprotein, the beta component is a hemoprotein. The cofactor is FAD. Requires FMN as cofactor.

The catalysed reaction is hydrogen sulfide + 3 NADP(+) + 3 H2O = sulfite + 3 NADPH + 4 H(+). The protein operates within sulfur metabolism; hydrogen sulfide biosynthesis; hydrogen sulfide from sulfite (NADPH route): step 1/1. Functionally, component of the sulfite reductase complex that catalyzes the 6-electron reduction of sulfite to sulfide. This is one of several activities required for the biosynthesis of L-cysteine from sulfate. The flavoprotein component catalyzes the electron flow from NADPH -&gt; FAD -&gt; FMN to the hemoprotein component. The polypeptide is Sulfite reductase [NADPH] flavoprotein alpha-component (Shigella boydii serotype 4 (strain Sb227)).